The chain runs to 546 residues: CTP synthase (546 aa).

The interval Met1–Ile266 is amidoligase domain. Residue Ser14 coordinates CTP. Ser14 serves as a coordination point for UTP. Residues Ser15–Ile20 and Asp72 contribute to the ATP site. Positions 72 and 140 each coordinate Mg(2+). Residues Asp147–Glu149, Lys187–Gln192, and Lys223 each bind CTP. Residues Lys187–Gln192 and Lys223 contribute to the UTP site. Residue Lys239–Val241 coordinates ATP. The region spanning Thr291–Arg542 is the Glutamine amidotransferase type-1 domain. Gly352 lines the L-glutamine pocket. Cys379 acts as the Nucleophile; for glutamine hydrolysis in catalysis. L-glutamine is bound by residues Leu380 to Gln383, Glu403, and Arg470. Catalysis depends on residues His515 and Glu517.

This sequence belongs to the CTP synthase family. In terms of assembly, homotetramer.

It carries out the reaction UTP + L-glutamine + ATP + H2O = CTP + L-glutamate + ADP + phosphate + 2 H(+). The enzyme catalyses L-glutamine + H2O = L-glutamate + NH4(+). It catalyses the reaction UTP + NH4(+) + ATP = CTP + ADP + phosphate + 2 H(+). It functions in the pathway pyrimidine metabolism; CTP biosynthesis via de novo pathway; CTP from UDP: step 2/2. With respect to regulation, allosterically activated by GTP, when glutamine is the substrate; GTP has no effect on the reaction when ammonia is the substrate. The allosteric effector GTP functions by stabilizing the protein conformation that binds the tetrahedral intermediate(s) formed during glutamine hydrolysis. Inhibited by the product CTP, via allosteric rather than competitive inhibition. In terms of biological role, catalyzes the ATP-dependent amination of UTP to CTP with either L-glutamine or ammonia as the source of nitrogen. Regulates intracellular CTP levels through interactions with the four ribonucleotide triphosphates. The sequence is that of CTP synthase from Shewanella halifaxensis (strain HAW-EB4).